A 483-amino-acid chain; its full sequence is ATP-dependent RNA helicase dbp-5 (483 aa).

The disordered stretch occupies residues Met1 to Asn47. A compositionally biased stretch (low complexity) spans Ala14–Ser29. The short motif at Ser74–Glu102 is the Q motif element. The Helicase ATP-binding domain occupies Leu107–Met276. An ATP-binding site is contributed by Ser120 to Thr127. The DEAD box motif lies at Asp223–Asp226. The 152-residue stretch at Ile304–Asp455 folds into the Helicase C-terminal domain.

It belongs to the DEAD box helicase family. DDX19/DBP5 subfamily. As to quaternary structure, associates with the nuclear pore complex.

The protein localises to the cytoplasm. It localises to the nucleus. The protein resides in the nuclear pore complex. Its subcellular location is the nucleus membrane. The enzyme catalyses ATP + H2O = ADP + phosphate + H(+). In terms of biological role, ATP-dependent RNA helicase associated with the nuclear pore complex and essential for mRNA export from the nucleus. May participate in a terminal step of mRNA export through the removal of proteins that accompany mRNA through the nucleopore complex. May also be involved in early transcription. The protein is ATP-dependent RNA helicase dbp-5 (dbp-5) of Neurospora crassa (strain ATCC 24698 / 74-OR23-1A / CBS 708.71 / DSM 1257 / FGSC 987).